The primary structure comprises 521 residues: Matrix metalloproteinase-A (521 aa).

The N-terminal stretch at 1–21 (MFTGLHDILIILFLLVTLKIA) is a signal peptide. Positions 22 to 95 (QNVDHTKFLQ…EDHQKSRGKR (74 aa)) are cleaved as a propeptide — activation peptide. The short motif at 78-85 (PRCGHPDV) is the Cysteine switch element. C80 is a Zn(2+) binding site. Topologically, residues 96-500 (YAPPQFKWKE…FCPRNEKLVL (405 aa)) are extracellular. N199 carries an N-linked (GlcNAc...) asparagine glycan. H215 serves as a coordination point for Zn(2+). Residue E216 is part of the active site. Residues H219 and H225 each coordinate Zn(2+). The disordered stretch occupies residues 259-298 (KASKKENEEEERKTENEDKRRKTEKDRGRTREHESDDIRP). Positions 261 to 298 (SKKENEEEERKTENEDKRRKTEKDRGRTREHESDDIRP) are enriched in basic and acidic residues. 3 Hemopexin repeats span residues 300-347 (ECRV…FPGL), 391-443 (EKYV…WARV), and 444-492 (PKGV…FGFC). A glycan (N-linked (GlcNAc...) asparagine) is linked at N469. The chain crosses the membrane as a helical span at residues 501 to 521 (NSSSSHFSLIYATITILILIF).

It belongs to the peptidase M10A family. Zn(2+) is required as a cofactor. Expressed in the anchor cell. Expressed in the anchor cell throughout the L3 and the early L4 stage, but not in vulva precursor cells P6.p, P6.px, or P6.pxx. Expression in P6.pxxx cells begins in late-L4 stage. During L4 lethargus, expressed in all four vulE cells, but not in vulF cells. The expression in vulE cells persists in adulthood. In males, expressed in the linker cell (LC) from the early L4 stage until LC death during the L4-to-adult molt.

It localises to the cell membrane. It is found in the basolateral cell membrane. In terms of biological role, metalloprotease which, together with cadherin cdh-3 and hemicentin him-4, plays a role in anchor cell (AC) invasion during postembryonic vulval development probably by promoting the degradation of the basement membrane separating the gonad from the vulva epithelium. The protein is Matrix metalloproteinase-A of Caenorhabditis elegans.